A 130-amino-acid chain; its full sequence is Fluoride-specific ion channel FluC (130 aa).

The next 4 helical transmembrane spans lie at 3-23 (FIFLWAALGGAIGSSLRYFVG), 39-59 (GTFSVNVIGCFVIGFMGHLAV), 67-87 (FGIFFVTGVLGGFTTFSSYGL), and 102-122 (VSYALGTNILGLIGVAIGWFL). Na(+) contacts are provided by Gly-77 and Thr-80.

This sequence belongs to the fluoride channel Fluc/FEX (TC 1.A.43) family.

It is found in the cell inner membrane. The enzyme catalyses fluoride(in) = fluoride(out). Na(+) is not transported, but it plays an essential structural role and its presence is essential for fluoride channel function. In terms of biological role, fluoride-specific ion channel. Important for reducing fluoride concentration in the cell, thus reducing its toxicity. In Helicobacter pylori (strain Shi470), this protein is Fluoride-specific ion channel FluC.